We begin with the raw amino-acid sequence, 448 residues long: Trigger factor (448 aa).

The 82-residue stretch at 162-243 folds into the PPIase FKBP-type domain; it reads GDFVQIDLNA…VRTVKEKELP (82 aa).

It belongs to the FKBP-type PPIase family. Tig subfamily.

It is found in the cytoplasm. It catalyses the reaction [protein]-peptidylproline (omega=180) = [protein]-peptidylproline (omega=0). Its function is as follows. Involved in protein export. Acts as a chaperone by maintaining the newly synthesized protein in an open conformation. Functions as a peptidyl-prolyl cis-trans isomerase. This is Trigger factor from Salinispora arenicola (strain CNS-205).